Here is a 239-residue protein sequence, read N- to C-terminus: Probable transcriptional regulatory protein lmo0369 (239 aa).

This sequence belongs to the TACO1 family. YeeN subfamily.

It localises to the cytoplasm. The sequence is that of Probable transcriptional regulatory protein lmo0369 from Listeria monocytogenes serovar 1/2a (strain ATCC BAA-679 / EGD-e).